Consider the following 481-residue polypeptide: Mediator of RNA polymerase II transcription subunit 3 (481 aa).

Positions 79–107 form a coiled coil; sequence QEKFQMIRSKVLGLTERLQELSNDFEELQ. 2 disordered regions span residues 140 to 261 and 415 to 463; these read AGAS…MGTP and NTKG…KSAY. A compositionally biased stretch (low complexity) spans 148–203; sequence TPTPAAATPTTAPTPGAGTKKAAKTAPTPTATATIGTPSNNAPTPATTATTPGTQA. The span at 204–213 shows a compositional bias: basic residues; sequence KKPRKPRQTK. The segment covering 214–248 has biased composition (low complexity); it reads KQQQAAAAAAAVAQAQAQAQAQAQNQNQNNMQNKN. Residues 249–259 are compositionally biased toward polar residues; sequence ISNPGMNSNMG. Positions 428-458 are enriched in low complexity; sequence MDQNQNQNQSQNQSQNQNQSMNMNMNNDSNN.

This sequence belongs to the Mediator complex subunit 3 family. In terms of assembly, component of the Mediator complex.

It localises to the nucleus. Functionally, component of the Mediator complex, a coactivator involved in regulated gene transcription of nearly all RNA polymerase II-dependent genes. Mediator functions as a bridge to convey information from gene-specific regulatory proteins to the basal RNA polymerase II transcription machinery. Mediator is recruited to promoters by direct interactions with regulatory proteins and serves as a scaffold for the assembly of a functional preinitiation complex with RNA polymerase II and the general transcription factors. This is Mediator of RNA polymerase II transcription subunit 3 (PGD1) from Candida glabrata (strain ATCC 2001 / BCRC 20586 / JCM 3761 / NBRC 0622 / NRRL Y-65 / CBS 138) (Yeast).